The sequence spans 336 residues: Phospho-N-acetylmuramoyl-pentapeptide-transferase (336 aa).

The next 10 membrane-spanning stretches (helical) occupy residues 3–23 (LTLI…PYFI), 53–73 (GGTV…LFSI), 78–98 (SLAL…IGFL), 118–138 (LALQ…PSGI), 143–163 (VFGY…FWVV), 174–194 (GIDG…GVIA), 200–220 (FDVL…FCFN), 226–246 (VFMG…ISIA), 251–271 (WTLL…MLQV), and 316–336 (AFLW…LYVF).

It belongs to the glycosyltransferase 4 family. MraY subfamily. It depends on Mg(2+) as a cofactor.

The protein localises to the cell membrane. It catalyses the reaction UDP-N-acetyl-alpha-D-muramoyl-L-alanyl-gamma-D-glutamyl-L-lysyl-D-alanyl-D-alanine + di-trans,octa-cis-undecaprenyl phosphate = Mur2Ac(oyl-L-Ala-gamma-D-Glu-L-Lys-D-Ala-D-Ala)-di-trans,octa-cis-undecaprenyl diphosphate + UMP. Its pathway is cell wall biogenesis; peptidoglycan biosynthesis. In terms of biological role, catalyzes the initial step of the lipid cycle reactions in the biosynthesis of the cell wall peptidoglycan: transfers peptidoglycan precursor phospho-MurNAc-pentapeptide from UDP-MurNAc-pentapeptide onto the lipid carrier undecaprenyl phosphate, yielding undecaprenyl-pyrophosphoryl-MurNAc-pentapeptide, known as lipid I. The polypeptide is Phospho-N-acetylmuramoyl-pentapeptide-transferase (Streptococcus pyogenes serotype M3 (strain ATCC BAA-595 / MGAS315)).